We begin with the raw amino-acid sequence, 143 residues long: Hemoglobin cathodic subunit alpha (143 aa).

S2 carries the N-acetylserine modification. The Globin domain maps to S2–R143. H59 serves as a coordination point for O2. Residue H89 participates in heme b binding.

It belongs to the globin family. Heterotetramer of two alpha chains and two beta chains. As to expression, red blood cells.

Its function is as follows. Involved in oxygen transport from the gills to the various peripheral tissues. This chain is Hemoglobin cathodic subunit alpha, found in Conger conger (Conger eel).